The sequence spans 358 residues: Neutral protease 2 homolog PADG_00776 (358 aa).

The first 19 residues, 1–19 (MRRVSGILAVAAFTISAFA), serve as a signal peptide directing secretion. Positions 20 to 185 (GVIQPVAKDA…MNQFVKIAKL (166 aa)) are excised as a propeptide. Cystine bridges form between Cys-188–Cys-259 and Cys-266–Cys-284. The N-linked (GlcNAc...) asparagine glycan is linked to Asn-249. His-309 lines the Zn(2+) pocket. Residue Glu-310 is part of the active site. His-313 and Asp-324 together coordinate Zn(2+).

This sequence belongs to the peptidase M35 family. Requires Zn(2+) as cofactor.

It localises to the secreted. It catalyses the reaction Preferential cleavage of bonds with hydrophobic residues in P1'. Also 3-Asn-|-Gln-4 and 8-Gly-|-Ser-9 bonds in insulin B chain.. Functionally, secreted metalloproteinase that allows assimilation of proteinaceous substrates. Shows high activities on basic nuclear substrates such as histone and protamine. In Paracoccidioides brasiliensis (strain Pb18), this protein is Neutral protease 2 homolog PADG_00776.